The chain runs to 281 residues: ATP synthase subunit a (281 aa).

7 helical membrane passes run 56–76 (KPMLLALLGSIVIVGFFWAAF), 117–137 (LVVSLFFFVWMMNLWSIIPVA), 144–164 (IIAYPAVLAAIVYVTWITLTF), 181–201 (KSLGPVLPLAMLIEFFSNILI), 215–235 (FAGHTLLLLFTIASWYLLNGV), 237–257 (IAYAGVSFIMTVVMTAFELFI), and 259–279 (ALQAYVFVLLTCTYIQGAMAE).

This sequence belongs to the ATPase A chain family. F-type ATPases have 2 components, CF(1) - the catalytic core - and CF(0) - the membrane proton channel. CF(1) has five subunits: alpha(3), beta(3), gamma(1), delta(1), epsilon(1). CF(0) has three main subunits: a(1), b(2) and c(9-12). The alpha and beta chains form an alternating ring which encloses part of the gamma chain. CF(1) is attached to CF(0) by a central stalk formed by the gamma and epsilon chains, while a peripheral stalk is formed by the delta and b chains.

It is found in the cell membrane. Key component of the proton channel; it plays a direct role in the translocation of protons across the membrane. The chain is ATP synthase subunit a from Streptomyces lividans.